We begin with the raw amino-acid sequence, 183 residues long: Potassium-transporting ATPase KdpC subunit (183 aa).

Residues 10-30 (ASLLVLSLVTGVAYPLLVTGI) form a helical membrane-spanning segment.

This sequence belongs to the KdpC family. In terms of assembly, the system is composed of three essential subunits: KdpA, KdpB and KdpC.

Its subcellular location is the cell inner membrane. Its function is as follows. Part of the high-affinity ATP-driven potassium transport (or Kdp) system, which catalyzes the hydrolysis of ATP coupled with the electrogenic transport of potassium into the cytoplasm. This subunit acts as a catalytic chaperone that increases the ATP-binding affinity of the ATP-hydrolyzing subunit KdpB by the formation of a transient KdpB/KdpC/ATP ternary complex. The sequence is that of Potassium-transporting ATPase KdpC subunit from Pseudomonas aeruginosa (strain ATCC 15692 / DSM 22644 / CIP 104116 / JCM 14847 / LMG 12228 / 1C / PRS 101 / PAO1).